The chain runs to 207 residues: Ribosomal RNA small subunit methyltransferase G (207 aa).

Residues G73, L78, 124-125 (VE), and R139 each bind S-adenosyl-L-methionine.

The protein belongs to the methyltransferase superfamily. RNA methyltransferase RsmG family.

It is found in the cytoplasm. The catalysed reaction is guanosine(527) in 16S rRNA + S-adenosyl-L-methionine = N(7)-methylguanosine(527) in 16S rRNA + S-adenosyl-L-homocysteine. Functionally, specifically methylates the N7 position of guanine in position 527 of 16S rRNA. In Escherichia fergusonii (strain ATCC 35469 / DSM 13698 / CCUG 18766 / IAM 14443 / JCM 21226 / LMG 7866 / NBRC 102419 / NCTC 12128 / CDC 0568-73), this protein is Ribosomal RNA small subunit methyltransferase G.